The chain runs to 343 residues: Fructose-1,6-bisphosphatase class 1 (343 aa).

Residues Glu-90, Asp-109, Leu-111, and Asp-112 each coordinate Mg(2+). Substrate is bound by residues 112–115 and Asn-199; that span reads DGSS. Glu-271 serves as a coordination point for Mg(2+).

It belongs to the FBPase class 1 family. Homotetramer. It depends on Mg(2+) as a cofactor.

The protein localises to the cytoplasm. It catalyses the reaction beta-D-fructose 1,6-bisphosphate + H2O = beta-D-fructose 6-phosphate + phosphate. It participates in carbohydrate biosynthesis; Calvin cycle. This Rhodopseudomonas palustris (strain HaA2) protein is Fructose-1,6-bisphosphatase class 1.